The sequence spans 93 residues: MGFRIAGIVRRTSFYTTQAASKRVDVPKGYAAVYVGDKMRRFTIPVSYLNEPSFQELLSQAEEEFGYDHPMGGLTIPCKEEEFLNVTAHLNEL.

It belongs to the ARG7 family.

In Glycine max (Soybean), this protein is Auxin-induced protein 10A5.